The following is a 799-amino-acid chain: Protein-lysine N-methyltransferase SMYD4 (799 aa).

Arginine 112–alanine 114 is an S-adenosyl-L-methionine binding site. One can recognise an SET domain in the interval leucine 233 to glycine 570. The Zn(2+) site is built by cysteine 296, cysteine 299, cysteine 309, cysteine 312, cysteine 318, cysteine 322, histidine 331, and cysteine 335. The MYND-type zinc-finger motif lies at cysteine 296 to cysteine 335. Residues asparagine 535–histidine 536, tyrosine 569, and phenylalanine 591 each bind S-adenosyl-L-methionine.

The protein belongs to the class V-like SAM-binding methyltransferase superfamily. As to quaternary structure, interacts (via MYND-type zinc finger) with HDAC1.

It localises to the nucleus. Its subcellular location is the cytoplasm. The catalysed reaction is L-lysyl-[protein] + S-adenosyl-L-methionine = N(6)-methyl-L-lysyl-[protein] + S-adenosyl-L-homocysteine + H(+). Its function is as follows. Protein-lysine N-methyltransferase. Monomethylates PRMT5, modulating its transcriptional activity. May also act as a histone methyltransferase. Plays a critical role in cardiac development. Acts as a key epigenetic regulator of gene expression during cardiac development via its dual activities as a methyltransferase and negative regulator of HDAC1. In Mus musculus (Mouse), this protein is Protein-lysine N-methyltransferase SMYD4 (Smyd4).